Here is a 315-residue protein sequence, read N- to C-terminus: MGLALEKVCFLGVIFLISACTVKKEGVKNLSYKHESLRAYENAKDYDPTTKKAAYKRNFFERHFKRYSDSQDSNTKDQPLDNGMRDSSSIQRATMRPYQVGGKWYYPTKVDLGEKFDGVASWYGPNFHAKKTSNGEIYNMYAHTAAHKTLPMNTVVKVINVDNNLSTIVRINDRGPFVSDRIIDLSNAAARDIDMVKKGTASVRLIVLGFGGVISTQYEQSFNASSSKILHKEFKVGESEKSVSGGKFSLQMGAFRNQIGAQTLADKLQAENPNYSVKVAFKDDLYKVLVQGFQSEEEARDFMKKYNQNAVLTRE.

A signal peptide spans 1-19 (MGLALEKVCFLGVIFLISA). A lipid anchor (N-palmitoyl cysteine) is attached at Cys-20. Cys-20 carries S-diacylglycerol cysteine lipidation. Positions 68 to 79 (SDSQDSNTKDQP) are enriched in basic and acidic residues. The disordered stretch occupies residues 68-92 (SDSQDSNTKDQPLDNGMRDSSSIQR). The SPOR domain maps to 242-315 (SVSGGKFSLQ…YNQNAVLTRE (74 aa)).

The protein belongs to the RlpA family.

It is found in the cell membrane. Functionally, lytic transglycosylase with a strong preference for naked glycan strands that lack stem peptides. The chain is Endolytic peptidoglycan transglycosylase RlpA from Helicobacter pylori (strain ATCC 700392 / 26695) (Campylobacter pylori).